Consider the following 179-residue polypeptide: uncharacterized protein (179 aa).

Residues 1–32 (MELQGAQEDLGISLSSPRRNHETRPGSKAKGR) form a disordered region.

This is an uncharacterized protein from Homo sapiens (Human).